The chain runs to 173 residues: MKRLSLAMVTLLACAGAQAASEKVEMNLVTAQGVGQSIGTVVIDETEGGLKFTPHLKALPPGEHGFHIHANGSCQPAIKDGKAVAAEAAGGHLDPQNTGKHEGPEGQGHLGDLPVLVVNNDGIASEPVTAPRLKSLDEVKDKALMIHVGGDNMSDQPKPLGGGGMRYACGVIK.

The N-terminal stretch at 1–19 (MKRLSLAMVTLLACAGAQA) is a signal peptide. Cu cation is bound by residues histidine 67, histidine 69, and histidine 92. Cysteine 74 and cysteine 169 are oxidised to a cystine. Residues histidine 92, histidine 101, histidine 109, and aspartate 112 each contribute to the Zn(2+) site. Residue histidine 147 participates in Cu cation binding.

Belongs to the Cu-Zn superoxide dismutase family. In terms of assembly, monomer. Requires Cu cation as cofactor. The cofactor is Zn(2+).

The protein resides in the periplasm. The catalysed reaction is 2 superoxide + 2 H(+) = H2O2 + O2. Destroys radicals which are normally produced within the cells and which are toxic to biological systems. The chain is Superoxide dismutase [Cu-Zn] 2 (sodC) from Salmonella typhimurium (strain LT2 / SGSC1412 / ATCC 700720).